Here is a 1037-residue protein sequence, read N- to C-terminus: Ephrin type-A receptor 5 (1037 aa).

An N-terminal signal peptide occupies residues 1–24 (MRGSGPRGAGRRRPPSGGGDTPIT). The tract at residues 1 to 24 (MRGSGPRGAGRRRPPSGGGDTPIT) is disordered. At 25 to 573 (PASLAGCYSA…AASSDQSQIP (549 aa)) the chain is on the extracellular side. The Eph LBD domain maps to 60–238 (EVNLLDSRTV…YYKKCPSVVR (179 aa)). 6 N-linked (GlcNAc...) asparagine glycosylation sites follow: Asn264, Asn299, Asn369, Asn423, Asn436, and Asn461. Fibronectin type-III domains are found at residues 357–467 (PPSA…TNQA) and 468–562 (APSP…TTPV). Residues 574-594 (VIAVSVTVGVILLAVVIGVLL) traverse the membrane as a helical segment. Topologically, residues 595-1037 (SGSCCECGCG…VQLVNGMVPL (443 aa)) are cytoplasmic. Phosphotyrosine; by autocatalysis occurs at positions 650 and 656. Residues 675–936 (ITIERVIGAG…EIVNMLDKLI (262 aa)) enclose the Protein kinase domain. Residues 681-689 (IGAGEFGEV) and Lys707 contribute to the ATP site. Catalysis depends on Asp800, which acts as the Proton acceptor. Phosphotyrosine; by autocatalysis occurs at positions 833 and 982. One can recognise an SAM domain in the interval 965-1029 (GAYRSVGEWL…MNSLQEMKVQ (65 aa)). A PDZ-binding motif is present at residues 1035–1037 (VPL).

Belongs to the protein kinase superfamily. Tyr protein kinase family. Ephrin receptor subfamily. As to quaternary structure, heterotetramer upon binding of the ligand. The heterotetramer is composed of an ephrin dimer and a receptor dimer. Oligomerization is probably required to induce biological responses. Interacts (via SAM domain) with SAMD5 (via SAM domain). Post-translationally, phosphorylated. Phosphorylation is stimulated by the ligand EFNA5. Dephosphorylation upon stimulation by glucose, inhibits EPHA5 forward signaling and results in insulin secretion. In terms of tissue distribution, almost exclusively expressed in the nervous system in cortical neurons, cerebellar Purkinje cells and pyramidal neurons within the cortex and hippocampus. Display an increasing gradient of expression from the forebrain to hindbrain and spinal cord.

It is found in the cell membrane. It localises to the cell projection. The protein resides in the axon. Its subcellular location is the dendrite. The catalysed reaction is L-tyrosyl-[protein] + ATP = O-phospho-L-tyrosyl-[protein] + ADP + H(+). Functionally, receptor tyrosine kinase which binds promiscuously GPI-anchored ephrin-A family ligands residing on adjacent cells, leading to contact-dependent bidirectional signaling into neighboring cells. The signaling pathway downstream of the receptor is referred to as forward signaling while the signaling pathway downstream of the ephrin ligand is referred to as reverse signaling. Among GPI-anchored ephrin-A ligands, EFNA5 most probably constitutes the cognate/functional ligand for EPHA5. Functions as an axon guidance molecule during development and may be involved in the development of the retinotectal, entorhino-hippocampal and hippocamposeptal pathways. Together with EFNA5 plays also a role in synaptic plasticity in adult brain through regulation of synaptogenesis. In addition to its function in the nervous system, the interaction of EPHA5 with EFNA5 mediates communication between pancreatic islet cells to regulate glucose-stimulated insulin secretion. The polypeptide is Ephrin type-A receptor 5 (EPHA5) (Homo sapiens (Human)).